Here is a 184-residue protein sequence, read N- to C-terminus: Tyrosine-protein kinase receptor Tie-1 (184 aa).

Residues 1-164 (QLLQFAADVA…RMQEARKAYV (164 aa)) form the Protein kinase domain. Residue Asp25 is the Proton acceptor of the active site. Position 53 is a phosphotyrosine; by autocatalysis (Tyr53).

Belongs to the protein kinase superfamily. Tyr protein kinase family. Tie subfamily. As to quaternary structure, interacts with svep1. As to expression, expressed in most populations of endothelial cells in 24 hours embryos, including the endocardium.

Its subcellular location is the cell membrane. It carries out the reaction L-tyrosyl-[protein] + ATP = O-phospho-L-tyrosyl-[protein] + ADP + H(+). Transmembrane tyrosine-protein kinase. Required for the formation of facial lymphatic structures and brain lymphatic endothelial cells. Also required for embryonic ventral and dorsal migration of parachordal lymphoblasts along the arterial intersegmental vessel. Plays a role in the embryonic formation of the dorsal longitudinal anastomotic vessel. This Danio rerio (Zebrafish) protein is Tyrosine-protein kinase receptor Tie-1 (tie1).